Consider the following 105-residue polypeptide: Chloroacetanilide N-alkylformylase 1, ferredoxin component (105 aa).

A 2Fe-2S ferredoxin-type domain is found at 2–105 (PTIIVTTRDG…GLRVAIAPED (104 aa)). C40, C46, C49, and C86 together coordinate [2Fe-2S] cluster.

It belongs to the adrenodoxin/putidaredoxin family. In terms of assembly, the chloroacetanilide N-alkylformylase multicomponent enzyme system is composed of an oxygenase component (CndA) and an electron transfer component formed by a ferredoxin reductase (CndC1) and a ferredoxin (CndB1). In vitro, chloroacetanilide N-alkylformylase assays in which CndB1 is substituted for CndB2 demonstrate that the two enzymes possess nearly identical activities. It depends on [2Fe-2S] cluster as a cofactor.

Functionally, component of the chloroacetanilide N-alkylformylase multicomponent enzyme system involved in the degradation of chloroacetanilide herbicides (N-alkoxyalkyl-N-chloroacetyl-substituted aniline derivatives). In vitro, functions as an intermediate electron transfer protein. This Rhizorhabdus wittichii (strain DC-6 / KACC 16600) (Sphingomonas wittichii) protein is Chloroacetanilide N-alkylformylase 1, ferredoxin component.